The chain runs to 1843 residues: MLSIDDHGGGGPLAVDIIPAGSGAQKTAPDAADPSLHGPGRANGDAVNADATAAEETGSRDDESQQQQQQQQQQQQQQQQQRSLLSERDLDQLWQWNAVVPETIQRCIHDIISEQAAQRPQDVAVQSWDGSLTYSELEHLSTQLALHLRLLGVDIGVTVPLCFEKSKWTVVALLAVMKAGAAFSLTDPSQPEARLQTIVEQTGAKLLVTSALQSSLGAKIAPGATVVAVSQATFDTPLQQSSDPLPDVPSSSLMYVIFTSGSTGKPKGVSISHENFTSGAIPRAEAVGYKSTSRVFDFPSYAFDVSIDCMLCTLACGGQVCVPSEQGRMNDLSGSIRDSKANMVHMTPSVARVLDSDIIPSLDVLGLGGEVVSGSDAATWRQFTHLIIGYGPSECTVGCTVNNNTSLSTGIGKGVGCVMWLVDPEDHNVLVPVGEVGELLIEGPVVGIGYLGEPAKTAEVFIEDPTWLTAGHGCYAGRHGRLYKTGDLVRYEDNLSGSIEFVGRKDQQVKIRGQRVELTEVEHHIQTCLPTGVKVVAEVIKPENASPTLVAFLAEKSSVGSQDGSLFVDPSPELSAALDKIDTTLGAKVPKYMIPAAFITLASMPTMVSMKTDRKKLREIGISIPRSKLGATHADEGPQEEPETDAEKKLAHAWQLVLASSSPVYKASSFFGLGGDSLRAMKLVSAAREQGLGLTVADIFNNPTLSAMANKSTSISSATQEQVKPFSLLQEGWDEQTARKDVAELCGIEPEQVEDVYPCTPLQEGLMALSSKVKEAYIAQRVVVLKDLETAKRLMAAYDEASRGSPILRTRIVQVPRRGLMQVVVNRKLEYTTGNNVAAYLASDRETPMDLGTALWRYAIITDEAAGTVSFVLTMHHALYDGWSMPLVVERINQAYQHPGKPLSRPSEFKDFIKYLLSQDAAESEKYWRAQLEGAHRLQFPLLPHQGYQTAADELLEEYVPLEQLPKNATVATLIRAAWAIVASQYINSTDVVFGETLTGRNAPVVGVDEIEGPMITTVPLRVPVDAEAQVGEFLQAIQEQTVGQIPHEHFGLQHIRRLSPDAREACELRAGLVLHPSADTAAPEVDATLPANNLIPHLAAREALKFNTFALMLVCSMDPKGFQVMASFDSKMVDKSTMRRALAQFKSVAQQLAQSTTTLLGNVRALSDDDAAALRDVVATAQEDPVVKTYDGASAAYIVRSDDASKMVPVGAIGELAIQTSQPKDLSTLPVPSWLAALLPPSAPTDALYLTGKLARYDAAGKIQVLGDKASLTASTDASAAARKPRVSATSQRQRRLRALWSHVLRTPETEIGLDDSFFLLGGDSISAMKLASEARPEGIRLTVAQMFSHKTLAEMAAVMECTDESSDSTAAAAAEAPIAPIAEPFELLDGLVDDKSAFLANVVKPQLQDASWTVSNVLPTRFLQELTVRATISKPRFAVRYELIFFDGPVDLRRLRQSCQRLVAHNEILRTVYVESADRIYAAVLDALETPFEEFAYTNPAVDLSTFTKDICRADVDKPQPLGSSFVKWLYVADPQRPAARSCLVFRMSHAQYDEMCLPIMLRQLSALYAHDKTPEPSVPFSAYVSHVMRTAVPASLPYWRELLAGSTITSFRPDIPITDRRHAAIAQTVDISARTRDVTLASLPTATWALCLARRRALRDVVFGEVVSGRNVGLPGAESIAGPCWQYVPLRVRFDPSWTGNDLLAFVQQQHVESAGHEAVSLREIAENCGLGWEKQASMPGDDRPAQWWFDTVCHQDVSHVKERENTDEEAQTKYETLYTDEEPLREWKVQTYVRDGGNSVVLEVVTFKSWEEHGKGLLADLVKAMEQLVHRPGEKLFSD.

A disordered region spans residues 1–83 (MLSIDDHGGG…QQQQQQQQRS (83 aa)). Residues 65-81 (QQQQQQQQQQQQQQQQQ) show a composition bias toward low complexity. The interval 133-528 (TYSELEHLST…TEVEHHIQTC (396 aa)) is adenylation 1. The disordered stretch occupies residues 628–647 (KLGATHADEGPQEEPETDAE). A Carrier 1 domain is found at 641 to 716 (EPETDAEKKL…AMANKSTSIS (76 aa)). Serine 677 carries the post-translational modification O-(pantetheine 4'-phosphoryl)serine. Residues 753 to 1175 (VEDVYPCTPL…ALSDDDAAAL (423 aa)) form a condensation 1 region. In terms of domain architecture, Carrier 2 spans 1289 to 1365 (SATSQRQRRL…EMAAVMECTD (77 aa)). An O-(pantetheine 4'-phosphoryl)serine modification is found at serine 1326. The segment at 1447-1734 (FFDGPVDLRR…LREIAENCGL (288 aa)) is condensation 2.

This sequence belongs to the NRP synthetase family. Pantetheine 4'-phosphate serves as cofactor.

Its pathway is siderophore biosynthesis. Functionally, nonribosomal peptide synthetase; part of the gene cluster that mediates the biosynthesis of at least 11 siderophores, including beauverichelin A, dimerumic acid (DA), Na-dimethyl coprogen (NADC), eleutherazine B, ferricrocin (FC), fusarinine A, fusarinine C (FsC), metachelin A, mevalonolactone, rhodotorulic acid (RA) and tenellin. This cocktail of siderophores for iron metabolism is essential for virulence, and more specifically for the fungal virulence in penetrating through the host cuticle. Siderophore synthesis is also involved in conidial germination under iron-deficient conditions. SIDC catalyzes the assembly of ferricrocin whereas SIDD catalyzes the assembly of fusarinine C. This Beauveria bassiana (strain ARSEF 2860) (White muscardine disease fungus) protein is Nonribosomal peptide synthetase SIDD.